The following is a 147-amino-acid chain: Hemoglobin subunit deltaH (147 aa).

The 145-residue stretch at 3-147 (RLTDSEKAEV…MANALAHKYH (145 aa)) folds into the Globin domain. Residues His64 and His93 each contribute to the heme b site.

This sequence belongs to the globin family. As to quaternary structure, heterotetramer of two delta chains and two alpha chains. As to expression, red blood cells.

In Dendrohyrax dorsalis (Beecroft's tree hyrax), this protein is Hemoglobin subunit deltaH (HBD).